Here is a 584-residue protein sequence, read N- to C-terminus: ATP-dependent lipid A-core flippase (584 aa).

5 consecutive transmembrane segments (helical) span residues 15 to 35 (LLGY…SMAV), 63 to 83 (IMWV…AGFI), 153 to 173 (LGML…CLVV), 251 to 271 (TGVT…FAGL), and 277 to 297 (GLTA…FAPV). Positions 27–309 (LLSMLSMAVA…ISSVSQAMQR (283 aa)) constitute an ABC transmembrane type-1 domain. The region spanning 341–576 (LSFDAVSFAY…GGLYARLHSL (236 aa)) is the ABC transporter domain. 375–382 (GSSGSGKT) is an ATP binding site.

This sequence belongs to the ABC transporter superfamily. Lipid exporter (TC 3.A.1.106) family. In terms of assembly, homodimer.

Its subcellular location is the cell inner membrane. The enzyme catalyses ATP + H2O + lipid A-core oligosaccharideSide 1 = ADP + phosphate + lipid A-core oligosaccharideSide 2.. Its function is as follows. Involved in lipopolysaccharide (LPS) biosynthesis. Translocates lipid A-core from the inner to the outer leaflet of the inner membrane. Transmembrane domains (TMD) form a pore in the inner membrane and the ATP-binding domain (NBD) is responsible for energy generation. The polypeptide is ATP-dependent lipid A-core flippase (Chromobacterium violaceum (strain ATCC 12472 / DSM 30191 / JCM 1249 / CCUG 213 / NBRC 12614 / NCIMB 9131 / NCTC 9757 / MK)).